The primary structure comprises 1406 residues: DNA-directed RNA polymerase subunit beta' (1406 aa).

Zn(2+)-binding residues include C70, C72, C85, and C88. Mg(2+)-binding residues include D460, D462, and D464. 4 residues coordinate Zn(2+): C814, C888, C895, and C898.

The protein belongs to the RNA polymerase beta' chain family. In terms of assembly, the RNAP catalytic core consists of 2 alpha, 1 beta, 1 beta' and 1 omega subunit. When a sigma factor is associated with the core the holoenzyme is formed, which can initiate transcription. Requires Mg(2+) as cofactor. The cofactor is Zn(2+).

It catalyses the reaction RNA(n) + a ribonucleoside 5'-triphosphate = RNA(n+1) + diphosphate. Its function is as follows. DNA-dependent RNA polymerase catalyzes the transcription of DNA into RNA using the four ribonucleoside triphosphates as substrates. The polypeptide is DNA-directed RNA polymerase subunit beta' (Yersinia pseudotuberculosis serotype O:1b (strain IP 31758)).